The primary structure comprises 88 residues: Large ribosomal subunit protein bL27 (88 aa).

A disordered region spans residues 1-24; the sequence is MAHKKGTGSTRNGRDSNSKRLGVK.

The protein belongs to the bacterial ribosomal protein bL27 family.

The protein is Large ribosomal subunit protein bL27 of Prochlorococcus marinus (strain MIT 9303).